We begin with the raw amino-acid sequence, 89 residues long: Phosphocarrier protein HPr (89 aa).

One can recognise an HPr domain in the interval 1-88 (MLEHELTVTN…ELFENRFNED (88 aa)). His15 serves as the catalytic Pros-phosphohistidine intermediate. Residue Ser46 is modified to Phosphoserine; by HPrK/P.

It belongs to the HPr family.

It is found in the cytoplasm. Its activity is regulated as follows. Phosphorylation on Ser-46 inhibits the phosphoryl transfer from enzyme I to HPr. In terms of biological role, general (non sugar-specific) component of the phosphoenolpyruvate-dependent sugar phosphotransferase system (sugar PTS). This major carbohydrate active-transport system catalyzes the phosphorylation of incoming sugar substrates concomitantly with their translocation across the cell membrane. The phosphoryl group from phosphoenolpyruvate (PEP) is transferred to the phosphoryl carrier protein HPr by enzyme I. Phospho-HPr then transfers it to the PTS EIIA domain. The chain is Phosphocarrier protein HPr (ptsH) from Xylella fastidiosa (strain Temecula1 / ATCC 700964).